Consider the following 271-residue polypeptide: Tryptophan synthase alpha chain (271 aa).

Active-site proton acceptor residues include E51 and D62.

It belongs to the TrpA family. In terms of assembly, tetramer of two alpha and two beta chains.

The catalysed reaction is (1S,2R)-1-C-(indol-3-yl)glycerol 3-phosphate + L-serine = D-glyceraldehyde 3-phosphate + L-tryptophan + H2O. It participates in amino-acid biosynthesis; L-tryptophan biosynthesis; L-tryptophan from chorismate: step 5/5. The alpha subunit is responsible for the aldol cleavage of indoleglycerol phosphate to indole and glyceraldehyde 3-phosphate. This Prochlorococcus marinus (strain NATL2A) protein is Tryptophan synthase alpha chain.